The primary structure comprises 1289 residues: Trafficking protein particle complex II-specific subunit 120 (1289 aa).

Residues 354 to 365 (STGISPVDSNSK) show a composition bias toward polar residues. The tract at residues 354 to 374 (STGISPVDSNSKATASTTASS) is disordered. Phosphoserine is present on residues S379 and S387.

The protein belongs to the TRS120 family. Part of the multisubunit TRAPP (transport protein particle) II complex composed of BET3, BET5, TRS20, TRS23, TRS31, TRS33, TRS65, TRS120 and TRS130. Interacts directly with TRS65.

It localises to the golgi apparatus. The protein resides in the cis-Golgi network. Its function is as follows. Specific subunit of the TRAPP II complex, a highly conserved vesicle tethering complex that functions in the late Golgi as a guanine nucleotide exchanger (GEF) for the Golgi YPT1 GTPase. TRS120 plays a role in the YPT GEF activity of TRAPP II in concert with the two other TRAPP II-specific subunits TRS65 and TRS130. The protein is Trafficking protein particle complex II-specific subunit 120 (TRS120) of Saccharomyces cerevisiae (strain ATCC 204508 / S288c) (Baker's yeast).